A 153-amino-acid polypeptide reads, in one-letter code: Transcriptional repressor NrdR (153 aa).

A zinc finger spans residues 3–34 (CPYCGHPDTRVVDSRPSDEGMAIRRRRECPSC). Residues 49 to 136 (LMVVKRDGRK…VYREFDSVER (88 aa)) form the ATP-cone domain.

Belongs to the NrdR family. Requires Zn(2+) as cofactor.

Its function is as follows. Negatively regulates transcription of bacterial ribonucleotide reductase nrd genes and operons by binding to NrdR-boxes. This Thermus thermophilus (strain ATCC BAA-163 / DSM 7039 / HB27) protein is Transcriptional repressor NrdR.